The following is an 865-amino-acid chain: NBPF family member NBPF11 (865 aa).

The stretch at 70 to 130 (MLRNERQFKE…RSLNEHLQAL (61 aa)) forms a coiled coil. The tract at residues 161 to 200 (KLSPENDEDEDEDVQVEEDEKVLESSAPREVQKAEESKVP) is disordered. A compositionally biased stretch (acidic residues) spans 165–181 (ENDEDEDEDVQVEEDEK). The 95-residue stretch at 165–259 (ENDEDEDEDV…GCQDALNILP (95 aa)) folds into the Olduvai 1 domain. Basic and acidic residues predominate over residues 190–200 (EVQKAEESKVP). Residues 339 to 401 (KSMLRNERQF…RSLNEHLQAL (63 aa)) are a coiled coil. Olduvai domains lie at 436–528 (ENDN…HIIP), 529–617 (ENES…ATGP), 620–675 (SREL…VDMD), 676–767 (EIEK…PPCP), and 770–865 (SREL…SAAC). Disordered regions lie at residues 450–475 (AEKV…EDSL) and 520–567 (WEDA…GYST). Acidic residues-rich tracts occupy residues 530–539 (NESDDEEEEE) and 550–562 (ESEE…ESWD). Residues 829–865 (RGRGRKEGEEDQRRKEEGEEKKGKKIKTHHAPGSAAC) are disordered. The segment covering 833-850 (RKEGEEDQRRKEEGEEKK) has biased composition (basic and acidic residues).

It belongs to the NBPF family. As to expression, expressed in spinal cord.

The protein localises to the cytoplasm. The chain is NBPF family member NBPF11 from Homo sapiens (Human).